A 465-amino-acid polypeptide reads, in one-letter code: Ribulose bisphosphate carboxylase large chain (465 aa).

N6,N6,N6-trimethyllysine is present on Lys4. Positions 113 and 163 each coordinate substrate. Catalysis depends on Lys165, which acts as the Proton acceptor. Position 167 (Lys167) interacts with substrate. 3 residues coordinate Mg(2+): Lys191, Asp193, and Glu194. The residue at position 191 (Lys191) is an N6-carboxylysine. His284 (proton acceptor) is an active-site residue. Substrate-binding residues include Arg285, His317, and Ser369.

Belongs to the RuBisCO large chain family. Type I subfamily. As to quaternary structure, heterohexadecamer of 8 large chains and 8 small chains; disulfide-linked. The disulfide link is formed within the large subunit homodimers. Mg(2+) serves as cofactor. The disulfide bond which can form in the large chain dimeric partners within the hexadecamer appears to be associated with oxidative stress and protein turnover.

It localises to the plastid. The protein localises to the chloroplast. It carries out the reaction 2 (2R)-3-phosphoglycerate + 2 H(+) = D-ribulose 1,5-bisphosphate + CO2 + H2O. The catalysed reaction is D-ribulose 1,5-bisphosphate + O2 = 2-phosphoglycolate + (2R)-3-phosphoglycerate + 2 H(+). Functionally, ruBisCO catalyzes two reactions: the carboxylation of D-ribulose 1,5-bisphosphate, the primary event in carbon dioxide fixation, as well as the oxidative fragmentation of the pentose substrate in the photorespiration process. Both reactions occur simultaneously and in competition at the same active site. The sequence is that of Ribulose bisphosphate carboxylase large chain from Manilkara zapota (Sapodilla plum).